A 132-amino-acid chain; its full sequence is ATP synthase epsilon chain (132 aa).

This sequence belongs to the ATPase epsilon chain family. F-type ATPases have 2 components, CF(1) - the catalytic core - and CF(0) - the membrane proton channel. CF(1) has five subunits: alpha(3), beta(3), gamma(1), delta(1), epsilon(1). CF(0) has three main subunits: a, b and c.

It is found in the cell membrane. Functionally, produces ATP from ADP in the presence of a proton gradient across the membrane. The protein is ATP synthase epsilon chain of Desulforamulus reducens (strain ATCC BAA-1160 / DSM 100696 / MI-1) (Desulfotomaculum reducens).